A 1546-amino-acid chain; its full sequence is Hybrid signal transduction histidine kinase D (1546 aa).

The stretch at 36 to 63 (MRKQKPDHEKTREELIEEINHLRAVSNS) forms a coiled coil. The PAS domain occupies 65–131 (KNARIMLDEM…NIDNVREAVH (67 aa)). Residues 139-193 (IRYETEIFGKSAGTEKITIDFSLMPLFNDKGEVSLILPEGRNITEKRLGELEIER) form the PAC domain. Residues 218–440 (NVSHELRTPL…QFTLRLPLTP (223 aa)) enclose the Histidine kinase 1 domain. H221 is subject to Phosphohistidine; by autocatalysis. In terms of domain architecture, Response regulatory 1 spans 571–686 (IVLVVEDNPE…ELVARVVNLM (116 aa)). D619 bears the 4-aspartylphosphate mark. Residues 747-1010 (NLSHELRTPL…QFTVVLPIIK (264 aa)) enclose the Histidine kinase 2 domain. Residue H750 is modified to Phosphohistidine; by autocatalysis. Low complexity-rich tracts occupy residues 1013 to 1031 (SSSN…SPPL) and 1042 to 1146 (NYIN…SNNN). Disordered stretches follow at residues 1013-1148 (SSSN…NNEK), 1266-1285 (NNSN…PPSS), and 1313-1350 (PLSE…KANS). Low complexity predominate over residues 1313–1346 (PLSELKSSSNNNNNNNNNSNNNNNNSMSPNLRSP). A Response regulatory 2 domain is found at 1359–1483 (QIMLVDDLEE…ELSNSILTLI (125 aa)). A 4-aspartylphosphate modification is found at D1412. The tract at residues 1500-1546 (QNNNNNNNNNNNNNNNNNNNNNNINNGNDDDSLLLTDSRPCKKANSQ) is disordered. The span at 1501–1526 (NNNNNNNNNNNNNNNNNNNNNNINNG) shows a compositional bias: low complexity.

The enzyme catalyses ATP + protein L-histidine = ADP + protein N-phospho-L-histidine.. Acts as a receptor histidine kinase for a signal transduction pathway. This protein undergoes an ATP-dependent autophosphorylation at a conserved histidine residue in the kinase core, and a phosphoryl group is then transferred to a conserved aspartate residue in the receiver domain. This chain is Hybrid signal transduction histidine kinase D (dhkD), found in Dictyostelium discoideum (Social amoeba).